The primary structure comprises 24 residues: Malate dehydrogenase (24 aa).

11–17 lines the NAD(+) pocket; sequence GAAGQIG.

This sequence belongs to the LDH/MDH superfamily. MDH type 2 family.

It carries out the reaction (S)-malate + NAD(+) = oxaloacetate + NADH + H(+). Catalyzes the reversible oxidation of malate to oxaloacetate. The polypeptide is Malate dehydrogenase (mdh) (Planomonospora venezuelensis).